Consider the following 705-residue polypeptide: Ribosomal RNA large subunit methyltransferase K/L (705 aa).

Residues 43–154 (VVYRCCLWSR…GEKGILGFDL (112 aa)) enclose the THUMP domain.

This sequence belongs to the methyltransferase superfamily. RlmKL family.

Its subcellular location is the cytoplasm. It catalyses the reaction guanosine(2445) in 23S rRNA + S-adenosyl-L-methionine = N(2)-methylguanosine(2445) in 23S rRNA + S-adenosyl-L-homocysteine + H(+). The catalysed reaction is guanosine(2069) in 23S rRNA + S-adenosyl-L-methionine = N(2)-methylguanosine(2069) in 23S rRNA + S-adenosyl-L-homocysteine + H(+). Functionally, specifically methylates the guanine in position 2445 (m2G2445) and the guanine in position 2069 (m7G2069) of 23S rRNA. This Aliivibrio salmonicida (strain LFI1238) (Vibrio salmonicida (strain LFI1238)) protein is Ribosomal RNA large subunit methyltransferase K/L.